The sequence spans 95 residues: UPF0358 protein BCE_3996 (95 aa).

The protein belongs to the UPF0358 family.

The polypeptide is UPF0358 protein BCE_3996 (Bacillus cereus (strain ATCC 10987 / NRS 248)).